A 378-amino-acid chain; its full sequence is MKFEVIQKSGGSRARLGRLLTPHGVVETPCFMPVGTSATVKAIFPKDLEEEGIKLILANAYHLLFRPGISVIKEFGGLHQFMGWNGAILTDSGGFQVFSLSPFCKIFPEGVRFKSPVDGSFLMLTPESAIHAQMELGSDIVMSLDHCPPWPSKEKDLLEATRRTIQWAKRGKETWMQQQEKLFSKPSASYSLFGIIQGGTDERLRLYCSEELMKIGFDGYAIGGLSVGEPHEESLAVVKTVSSFLDEKAPKYVMGMGQPWQIVQMVDLGIDLFDCVLPTRLARHGSAYVEEGIIHIKNARFRKDGSPLDSRCSCYACRKFSRGYIHHLLKSKEILGIMLLSMHNLLFYNRLMKEIRSFLAHGQWVDFLARWKDKKVTK.

The active-site Proton acceptor is aspartate 91. Substrate-binding positions include aspartate 91–phenylalanine 95, aspartate 145, glutamine 197, and glycine 224. Aspartate 274 functions as the Nucleophile in the catalytic mechanism. The segment at threonine 279 to arginine 283 is RNA binding; important for wobble base 34 recognition. Zn(2+) contacts are provided by cysteine 312, cysteine 314, cysteine 317, and histidine 343.

Belongs to the queuine tRNA-ribosyltransferase family. In terms of assembly, homodimer. Within each dimer, one monomer is responsible for RNA recognition and catalysis, while the other monomer binds to the replacement base PreQ1. The cofactor is Zn(2+).

The catalysed reaction is 7-aminomethyl-7-carbaguanine + guanosine(34) in tRNA = 7-aminomethyl-7-carbaguanosine(34) in tRNA + guanine. Its pathway is tRNA modification; tRNA-queuosine biosynthesis. Catalyzes the base-exchange of a guanine (G) residue with the queuine precursor 7-aminomethyl-7-deazaguanine (PreQ1) at position 34 (anticodon wobble position) in tRNAs with GU(N) anticodons (tRNA-Asp, -Asn, -His and -Tyr). Catalysis occurs through a double-displacement mechanism. The nucleophile active site attacks the C1' of nucleotide 34 to detach the guanine base from the RNA, forming a covalent enzyme-RNA intermediate. The proton acceptor active site deprotonates the incoming PreQ1, allowing a nucleophilic attack on the C1' of the ribose to form the product. After dissociation, two additional enzymatic reactions on the tRNA convert PreQ1 to queuine (Q), resulting in the hypermodified nucleoside queuosine (7-(((4,5-cis-dihydroxy-2-cyclopenten-1-yl)amino)methyl)-7-deazaguanosine). The sequence is that of Queuine tRNA-ribosyltransferase from Methylacidiphilum infernorum (isolate V4) (Methylokorus infernorum (strain V4)).